The primary structure comprises 2640 residues: Collagen alpha-5(VI) chain (2640 aa).

The signal sequence occupies residues 1–18 (MKLRLIAFVLILWTETLA). The interval 19-1426 (DQSPGPGPEY…ACCCTFCKCP (1408 aa)) is nonhelical region. 7 VWFA domains span residues 30-209 (DVVF…IKDV), 268-445 (DLIF…LKKI), 474-644 (DIYF…KNEI), 660-829 (DIMF…ESKL), 846-1023 (DIVF…QETL), 1037-1214 (DVIF…VREI), and 1226-1413 (DVVV…LGNI). 3 N-linked (GlcNAc...) asparagine glycosylation sites follow: asparagine 201, asparagine 292, and asparagine 614. Collagen-like domains are found at residues 1426-1478 (PGIP…GCPG), 1474-1524 (VGCP…DPGN), 1557-1614 (GQKG…GPEG), 1632-1689 (GSQG…GIPG), and 1706-1762 (GDPG…AGQP). The tract at residues 1427 to 1760 (GIPGPHGTRG…GRRGPKGTAG (334 aa)) is triple-helical region. Positions 1435-1761 (RGLQASKGSS…RRGPKGTAGQ (327 aa)) are disordered. Residues 1452–1464 (HRGEDGDPGRRGE) are compositionally biased toward basic and acidic residues. A compositionally biased stretch (basic and acidic residues) spans 1537–1567 (DGEKGFPGDPGDPGKDSNIKGQKGEKGERGR). Residues 1597-1609 (PSGQAGNPGPQGT) are compositionally biased toward polar residues. Over residues 1610 to 1622 (QGPEGLQGSQGSS) the composition is skewed to low complexity. A Cell attachment site motif is present at residues 1649–1651 (RGD). A compositionally biased stretch (gly residues) spans 1718–1727 (GIPGGPGPKG). The segment covering 1740–1750 (RSGLQGSQGPP) has biased composition (low complexity). A nonhelical region region spans residues 1761-2640 (QPIYSPCELI…NSKQDGEDAR (880 aa)). 2 VWFA domains span residues 1790-1970 (ELVF…KLRR) and 1996-2186 (DVAF…VKFL). Short sequence motifs (cell attachment site) lie at residues 2216–2218 (RGD) and 2259–2261 (RGD). Residues 2321 to 2516 (DVAFLIDASQ…PDLDYVIKFI (196 aa)) enclose the VWFA 10 domain. A glycan (N-linked (GlcNAc...) asparagine) is linked at asparagine 2541. The tract at residues 2617–2640 (DKEEPCSAETPAPVNSKQDGEDAR) is disordered.

It belongs to the type VI collagen family. Trimers composed of three different chains: alpha-1(VI), alpha-2(VI), and alpha-3(VI) or alpha-4(VI) or alpha-5(VI) or alpha-6(VI). In terms of processing, prolines at the third position of the tripeptide repeating unit (G-X-Y) are hydroxylated in some or all of the chains. In terms of tissue distribution, in newborn, it is expressed in lung, heart, kidney, muscle, brain, intestine, skin, femur, sternum and calvaria. In adult, it is widely expressed and is detected in lung, heart, kidney, spleen, muscle, ovary, uterus, brain, skin, liver and sternum.

Its subcellular location is the secreted. The protein resides in the extracellular space. It is found in the extracellular matrix. In terms of biological role, collagen VI acts as a cell-binding protein. The sequence is that of Collagen alpha-5(VI) chain (Col6a5) from Mus musculus (Mouse).